We begin with the raw amino-acid sequence, 763 residues long: Phosphoglycerol transferase I (763 aa).

A run of 4 helical transmembrane segments spans residues 1–21 (MSEL…AWKA), 26–46 (WWFA…ITLY), 77–97 (ILPG…LGWV), and 108–128 (VGYS…SPAF).

Belongs to the OpgB family.

The protein localises to the cell inner membrane. The catalysed reaction is a phosphatidylglycerol + a membrane-derived-oligosaccharide D-glucose = a 1,2-diacyl-sn-glycerol + a membrane-derived-oligosaccharide 6-(glycerophospho)-D-glucose.. The protein operates within glycan metabolism; osmoregulated periplasmic glucan (OPG) biosynthesis. In terms of biological role, transfers a phosphoglycerol residue from phosphatidylglycerol to the membrane-bound nascent glucan backbones. The chain is Phosphoglycerol transferase I from Salmonella dublin (strain CT_02021853).